The sequence spans 376 residues: Quinolinate synthase (376 aa).

2 residues coordinate iminosuccinate: H57 and S78. Residue C123 participates in [4Fe-4S] cluster binding. Iminosuccinate is bound by residues 149 to 151 and S166; that span reads YAN. Residue C210 coordinates [4Fe-4S] cluster. Iminosuccinate-binding positions include 236 to 238 and T253; that span reads HPE. Residue C307 coordinates [4Fe-4S] cluster.

Belongs to the quinolinate synthase family. Type 1 subfamily. The cofactor is [4Fe-4S] cluster.

The protein localises to the cytoplasm. It carries out the reaction iminosuccinate + dihydroxyacetone phosphate = quinolinate + phosphate + 2 H2O + H(+). The protein operates within cofactor biosynthesis; NAD(+) biosynthesis; quinolinate from iminoaspartate: step 1/1. Catalyzes the condensation of iminoaspartate with dihydroxyacetone phosphate to form quinolinate. The sequence is that of Quinolinate synthase from Paraburkholderia phymatum (strain DSM 17167 / CIP 108236 / LMG 21445 / STM815) (Burkholderia phymatum).